A 154-amino-acid chain; its full sequence is Peptide deformylase (154 aa).

Fe cation is bound by residues C90 and H132. Residue E133 is part of the active site. A Fe cation-binding site is contributed by H136.

The protein belongs to the polypeptide deformylase family. Fe(2+) serves as cofactor.

The catalysed reaction is N-terminal N-formyl-L-methionyl-[peptide] + H2O = N-terminal L-methionyl-[peptide] + formate. Removes the formyl group from the N-terminal Met of newly synthesized proteins. Requires at least a dipeptide for an efficient rate of reaction. N-terminal L-methionine is a prerequisite for activity but the enzyme has broad specificity at other positions. The chain is Peptide deformylase from Halothermothrix orenii (strain H 168 / OCM 544 / DSM 9562).